A 309-amino-acid polypeptide reads, in one-letter code: MASDGVVTVYGDGAITDTKVSSYAVKVGLAQMLRGGVIMDVVNAEQARIAEEAGATAVMALERVPADIRAQGGVARMSDPGLIKEIKSAVTIPVMAKARIGHFVEAQILEAIGIDYIDESEVLTPADDXHHINKHNFRIPFVCGCRNLGEALRRIAEGAAMIRTKGEAGTGNVIEAVRHVRSVLGDIRKLQSLDDDEVFAFAKQIAAPYELVRQTKQLGRLPVVNFAAGGVATPADAALMMQLGCDGVFVGSGVFKSGDPARRARAIVQAVTHYNDPHILAEVSCSLGEAMVGINLKDEKVERYAERSE.

Aspartate 40 is a D-ribose 5-phosphate binding site. Catalysis depends on lysine 97, which acts as the Schiff-base intermediate with D-ribose 5-phosphate. Glycine 169 provides a ligand contact to D-ribose 5-phosphate. Arginine 181 lines the D-glyceraldehyde 3-phosphate pocket. Residues glycine 230 and 251–252 each bind D-ribose 5-phosphate; that span reads GS.

It belongs to the PdxS/SNZ family.

The catalysed reaction is aldehydo-D-ribose 5-phosphate + D-glyceraldehyde 3-phosphate + L-glutamine = pyridoxal 5'-phosphate + L-glutamate + phosphate + 3 H2O + H(+). Its pathway is cofactor biosynthesis; pyridoxal 5'-phosphate biosynthesis. Catalyzes the formation of pyridoxal 5'-phosphate from ribose 5-phosphate (RBP), glyceraldehyde 3-phosphate (G3P) and ammonia. The ammonia is provided by PDX2. Can also use ribulose 5-phosphate and dihydroxyacetone phosphate as substrates, resulting from enzyme-catalyzed isomerization of RBP and G3P, respectively. Also plays an indirect role in resistance to singlet oxygen-generating photosensitizers. The protein is Probable pyridoxal 5'-phosphate synthase subunit PDX1 (PDX1) of Ginkgo biloba (Ginkgo).